We begin with the raw amino-acid sequence, 259 residues long: Hydroxyethylthiazole kinase (259 aa).

Methionine 37 is a binding site for substrate. ATP-binding residues include arginine 113 and threonine 158. A substrate-binding site is contributed by glycine 185.

The protein belongs to the Thz kinase family. Requires Mg(2+) as cofactor.

The enzyme catalyses 5-(2-hydroxyethyl)-4-methylthiazole + ATP = 4-methyl-5-(2-phosphooxyethyl)-thiazole + ADP + H(+). It participates in cofactor biosynthesis; thiamine diphosphate biosynthesis; 4-methyl-5-(2-phosphoethyl)-thiazole from 5-(2-hydroxyethyl)-4-methylthiazole: step 1/1. Catalyzes the phosphorylation of the hydroxyl group of 4-methyl-5-beta-hydroxyethylthiazole (THZ). The polypeptide is Hydroxyethylthiazole kinase (Helicobacter pylori (strain ATCC 700392 / 26695) (Campylobacter pylori)).